Consider the following 186-residue polypeptide: GMP synthase [glutamine-hydrolyzing] subunit A (186 aa).

Residues Ser-2 to Tyr-186 form the Glutamine amidotransferase type-1 domain. Cys-76 serves as the catalytic Nucleophile. Catalysis depends on residues His-163 and Glu-165.

As to quaternary structure, heterodimer composed of a glutamine amidotransferase subunit (A) and a GMP-binding subunit (B).

It catalyses the reaction XMP + L-glutamine + ATP + H2O = GMP + L-glutamate + AMP + diphosphate + 2 H(+). The protein operates within purine metabolism; GMP biosynthesis; GMP from XMP (L-Gln route): step 1/1. Catalyzes the synthesis of GMP from XMP. The polypeptide is GMP synthase [glutamine-hydrolyzing] subunit A (Methanosphaera stadtmanae (strain ATCC 43021 / DSM 3091 / JCM 11832 / MCB-3)).